The chain runs to 116 residues: MSNHKLIEAVTKSQLRTDLPTFRTGDTLRVHVRIVEGSRERIQVFEGVVIKRRGGGISETFTVRKISSGVGVERTFPLHTPKIEKIELKRRGKVRRAKLYYLRSLRGKAARIQEIR.

It belongs to the bacterial ribosomal protein bL19 family.

In terms of biological role, this protein is located at the 30S-50S ribosomal subunit interface and may play a role in the structure and function of the aminoacyl-tRNA binding site. The sequence is that of Large ribosomal subunit protein bL19 from Staphylococcus haemolyticus (strain JCSC1435).